The following is a 271-amino-acid chain: MPELPEVEVTRRGIDAHLAGRYITQVKIRNYALRWPVSPELITLLPGQRINTITRRAKYLLFACSKGTLIIHLGMSGSLRVLPVSTPSLLHDHFELWLDNEKMLRFRDPRRFGVILWWDGDVRQHPLLQKLGPEPLSDAFNGLFLHEKIQRRSISIKEALMNQHIVVGIGNIYANEALFHAGISPLIAAGSLSTALCARLVDAVKMTLQRAIEAGGSSLRDFTDCDGSPGCFQQQYWVYGRTGQPCRKCGALVSKTRQGQRSSFFCAQCQK.

Residue Pro2 is the Schiff-base intermediate with DNA of the active site. Catalysis depends on Glu3, which acts as the Proton donor. The active-site Proton donor; for beta-elimination activity is the Lys58. Positions 91, 110, and 152 each coordinate DNA. An FPG-type zinc finger spans residues 237–271; the sequence is WVYGRTGQPCRKCGALVSKTRQGQRSSFFCAQCQK. Arg261 serves as the catalytic Proton donor; for delta-elimination activity.

Belongs to the FPG family. In terms of assembly, monomer. Requires Zn(2+) as cofactor.

It carries out the reaction Hydrolysis of DNA containing ring-opened 7-methylguanine residues, releasing 2,6-diamino-4-hydroxy-5-(N-methyl)formamidopyrimidine.. It catalyses the reaction 2'-deoxyribonucleotide-(2'-deoxyribose 5'-phosphate)-2'-deoxyribonucleotide-DNA = a 3'-end 2'-deoxyribonucleotide-(2,3-dehydro-2,3-deoxyribose 5'-phosphate)-DNA + a 5'-end 5'-phospho-2'-deoxyribonucleoside-DNA + H(+). Its function is as follows. Involved in base excision repair of DNA damaged by oxidation or by mutagenic agents. Acts as a DNA glycosylase that recognizes and removes damaged bases. Has a preference for oxidized purines, such as 7,8-dihydro-8-oxoguanine (8-oxoG). Has AP (apurinic/apyrimidinic) lyase activity and introduces nicks in the DNA strand. Cleaves the DNA backbone by beta-delta elimination to generate a single-strand break at the site of the removed base with both 3'- and 5'-phosphates. The chain is Formamidopyrimidine-DNA glycosylase from Nitrosomonas eutropha (strain DSM 101675 / C91 / Nm57).